We begin with the raw amino-acid sequence, 292 residues long: Hypoxia responsive morphology factor A (292 aa).

Positions 48 to 70 (RRNGRRRNLEYVAQHRRKIARKI) match the Bipartite nuclear localization signal motif. Residues 156-186 (GKEHYSLHLSTLPAIRNAFGDVIFDAIERSP) form an RNA recognition motif (RRM)-like domain region.

Belongs to the hrmA family.

The protein localises to the nucleus. Its function is as follows. Hypoxia responsive morphology factor that modulates the expression of the subtelomeric hrmA-associated cluster (HAC) containing genes that alter the hyphal surface (such as reduced total chitin or increased beta-glucan exposure) and perturb inter-hyphal interactions within the developing biofilms, resulting in a loss of vertically aligned polarized growing filaments. Consequently, this hypoxia-typic morphotype (called H-MORPH) with altered biofilm architecture leads to increased hypoxia fitness, increased host inflammation, rapid disease progression, and mortality in a murine model of invasive aspergillosis. This Aspergillus fumigatus (strain CBS 144.89 / FGSC A1163 / CEA10) (Neosartorya fumigata) protein is Hypoxia responsive morphology factor A.